A 109-amino-acid polypeptide reads, in one-letter code: MARTNLQYPYKVLWCAQVKVVKTGLINFFAPSIQRQRERVCEGYLHETPLLLMQVVEREAITLAKTEFKNSFSNLHFFFLFWLLNFILFFRIHLYSCNFRMSIICEEYY.

A helical transmembrane segment spans residues 75–95 (LHFFFLFWLLNFILFFRIHLY).

Its subcellular location is the membrane. This is an uncharacterized protein from Schizosaccharomyces pombe (strain 972 / ATCC 24843) (Fission yeast).